A 354-amino-acid polypeptide reads, in one-letter code: Uroporphyrinogen decarboxylase (354 aa).

Residues 27 to 31 (RQAGR), Asp77, Tyr154, Ser209, and His327 contribute to the substrate site.

It belongs to the uroporphyrinogen decarboxylase family. Homodimer.

It localises to the cytoplasm. It carries out the reaction uroporphyrinogen III + 4 H(+) = coproporphyrinogen III + 4 CO2. It participates in porphyrin-containing compound metabolism; protoporphyrin-IX biosynthesis; coproporphyrinogen-III from 5-aminolevulinate: step 4/4. Functionally, catalyzes the decarboxylation of four acetate groups of uroporphyrinogen-III to yield coproporphyrinogen-III. In Shewanella sp. (strain ANA-3), this protein is Uroporphyrinogen decarboxylase.